Here is a 611-residue protein sequence, read N- to C-terminus: V-type proton ATPase catalytic subunit A (611 aa).

Residue 244-251 participates in ATP binding; it reads GAFGCGKT.

The protein belongs to the ATPase alpha/beta chains family. As to quaternary structure, V-ATPase is a heteromultimeric enzyme made up of two complexes: the ATP-hydrolytic V1 complex and the proton translocation V0 complex. The V1 complex consists of three catalytic AB heterodimers that form a heterohexamer, three peripheral stalks each consisting of EG heterodimers, one central rotor including subunits D and F, and the regulatory subunits C and H. The proton translocation complex V0 consists of the proton transport subunit a, a ring of proteolipid subunits c9c'', rotary subunit d and subunit e.

Its subcellular location is the cell membrane. It is found in the vacuole. The protein resides in the vesicle. The catalysed reaction is ATP + H2O + 4 H(+)(in) = ADP + phosphate + 5 H(+)(out). Its activity is regulated as follows. ATP hydrolysis occurs at the interface between the nucleotide-binding domains of subunits A and B. ATP hydrolysis triggers a conformational change in the subunits D and F, which induces a shift of subunit d. The c-ring is subsequently rotated and results in a continuous proton translocation across the membrane. In terms of biological role, catalytic subunit of the V1 complex of vacuolar(H+)-ATPase (V-ATPase), a multisubunit enzyme composed of a peripheral complex (V1) that hydrolyzes ATP and a membrane integral complex (V0) that translocates protons. V-ATPase is responsible for acidifying and maintaining the pH of intracellular compartments and in some cell types, is targeted to the plasma membrane, where it is responsible for acidifying the extracellular environment. During the trophozoite stage, involved in the acidification of the extracellular space next to the cell membrane. The protein is V-type proton ATPase catalytic subunit A of Plasmodium falciparum (isolate 3D7).